The chain runs to 166 residues: 3-isopropylmalate dehydratase small subunit 1 (166 aa).

It belongs to the LeuD family. LeuD type 2 subfamily. Heterodimer of LeuC and LeuD.

It catalyses the reaction (2R,3S)-3-isopropylmalate = (2S)-2-isopropylmalate. The protein operates within amino-acid biosynthesis; L-leucine biosynthesis; L-leucine from 3-methyl-2-oxobutanoate: step 2/4. In terms of biological role, catalyzes the isomerization between 2-isopropylmalate and 3-isopropylmalate, via the formation of 2-isopropylmaleate. The sequence is that of 3-isopropylmalate dehydratase small subunit 1 (leuD1) from Thermotoga maritima (strain ATCC 43589 / DSM 3109 / JCM 10099 / NBRC 100826 / MSB8).